The following is a 226-amino-acid chain: Ribonuclease 3 (226 aa).

One can recognise an RNase III domain in the interval 7–129 (LPRLCRTLGY…IIGAVYLDAD (123 aa)). Glu-42 contributes to the Mg(2+) binding site. Asp-46 is a catalytic residue. Mg(2+) is bound by residues Asp-115 and Glu-118. Residue Glu-118 is part of the active site. Positions 156–226 (DAKTLLQEYL…AAQVLELLNQ (71 aa)) constitute a DRBM domain.

It belongs to the ribonuclease III family. In terms of assembly, homodimer. Mg(2+) is required as a cofactor.

It is found in the cytoplasm. The enzyme catalyses Endonucleolytic cleavage to 5'-phosphomonoester.. Functionally, digests double-stranded RNA. Involved in the processing of primary rRNA transcript to yield the immediate precursors to the large and small rRNAs (23S and 16S). Processes some mRNAs, and tRNAs when they are encoded in the rRNA operon. Processes pre-crRNA and tracrRNA of type II CRISPR loci if present in the organism. The polypeptide is Ribonuclease 3 (Shewanella amazonensis (strain ATCC BAA-1098 / SB2B)).